Consider the following 277-residue polypeptide: Large ribosomal subunit protein uL2 (277 aa).

Residues 226-277 (NPIDHPHGGGEGRTSGGRHPVTPWGKPTKGKKTRSNKSTNKFILISRHKRKK) are disordered.

Belongs to the universal ribosomal protein uL2 family. Part of the 50S ribosomal subunit. Forms a bridge to the 30S subunit in the 70S ribosome.

Its function is as follows. One of the primary rRNA binding proteins. Required for association of the 30S and 50S subunits to form the 70S ribosome, for tRNA binding and peptide bond formation. It has been suggested to have peptidyltransferase activity; this is somewhat controversial. Makes several contacts with the 16S rRNA in the 70S ribosome. This chain is Large ribosomal subunit protein uL2, found in Rhodopseudomonas palustris (strain BisA53).